Here is a 228-residue protein sequence, read N- to C-terminus: 2-C-methyl-D-erythritol 4-phosphate cytidylyltransferase (228 aa).

Belongs to the IspD/TarI cytidylyltransferase family. IspD subfamily.

It catalyses the reaction 2-C-methyl-D-erythritol 4-phosphate + CTP + H(+) = 4-CDP-2-C-methyl-D-erythritol + diphosphate. It participates in isoprenoid biosynthesis; isopentenyl diphosphate biosynthesis via DXP pathway; isopentenyl diphosphate from 1-deoxy-D-xylulose 5-phosphate: step 2/6. In terms of biological role, catalyzes the formation of 4-diphosphocytidyl-2-C-methyl-D-erythritol from CTP and 2-C-methyl-D-erythritol 4-phosphate (MEP). This chain is 2-C-methyl-D-erythritol 4-phosphate cytidylyltransferase, found in Mannheimia succiniciproducens (strain KCTC 0769BP / MBEL55E).